The primary structure comprises 214 residues: dITP/XTP pyrophosphatase (214 aa).

Residue 13–18 coordinates substrate; it reads SHNKGK. Positions 45 and 74 each coordinate Mg(2+). Catalysis depends on aspartate 74, which acts as the Proton acceptor. Substrate contacts are provided by residues serine 75, 163 to 166, lysine 186, and 199 to 200; these read FGYD and HR.

It belongs to the HAM1 NTPase family. In terms of assembly, homodimer. Mg(2+) serves as cofactor.

The enzyme catalyses XTP + H2O = XMP + diphosphate + H(+). It carries out the reaction dITP + H2O = dIMP + diphosphate + H(+). It catalyses the reaction ITP + H2O = IMP + diphosphate + H(+). In terms of biological role, pyrophosphatase that catalyzes the hydrolysis of nucleoside triphosphates to their monophosphate derivatives, with a high preference for the non-canonical purine nucleotides XTP (xanthosine triphosphate), dITP (deoxyinosine triphosphate) and ITP. Seems to function as a house-cleaning enzyme that removes non-canonical purine nucleotides from the nucleotide pool, thus preventing their incorporation into DNA/RNA and avoiding chromosomal lesions. This chain is dITP/XTP pyrophosphatase, found in Agrobacterium fabrum (strain C58 / ATCC 33970) (Agrobacterium tumefaciens (strain C58)).